Here is a 698-residue protein sequence, read N- to C-terminus: Methionine--tRNA ligase (698 aa).

A 'HIGH' region motif is present at residues 18-28 (PYANGDLHVGH). Positions 149, 152, 161, and 165 each coordinate Zn(2+). Thr-350 provides a ligand contact to ATP. The segment at 567-590 (EAADAGDEEGEDEDEEPPAADLEP) is disordered. Acidic residues predominate over residues 570–584 (DAGDEEGEDEDEEPP). The tRNA-binding domain maps to 600–698 (DFQDLDIRVA…EDAEPGTKVQ (99 aa)).

Belongs to the class-I aminoacyl-tRNA synthetase family. MetG type 1 subfamily. Homodimer. Zn(2+) is required as a cofactor.

It localises to the cytoplasm. It catalyses the reaction tRNA(Met) + L-methionine + ATP = L-methionyl-tRNA(Met) + AMP + diphosphate. Its function is as follows. Is required not only for elongation of protein synthesis but also for the initiation of all mRNA translation through initiator tRNA(fMet) aminoacylation. This Natronomonas pharaonis (strain ATCC 35678 / DSM 2160 / CIP 103997 / JCM 8858 / NBRC 14720 / NCIMB 2260 / Gabara) (Halobacterium pharaonis) protein is Methionine--tRNA ligase.